Consider the following 110-residue polypeptide: UPF0145 protein MTH_507 (110 aa).

It belongs to the UPF0145 family.

This Methanothermobacter thermautotrophicus (strain ATCC 29096 / DSM 1053 / JCM 10044 / NBRC 100330 / Delta H) (Methanobacterium thermoautotrophicum) protein is UPF0145 protein MTH_507.